The chain runs to 206 residues: A-type ATP synthase subunit E (206 aa).

Belongs to the V-ATPase E subunit family. In terms of assembly, has multiple subunits with at least A(3), B(3), C, D, E, F, H, I and proteolipid K(x).

It is found in the cell membrane. Functionally, component of the A-type ATP synthase that produces ATP from ADP in the presence of a proton gradient across the membrane. The polypeptide is A-type ATP synthase subunit E (Methanothermobacter thermautotrophicus (strain ATCC 29096 / DSM 1053 / JCM 10044 / NBRC 100330 / Delta H) (Methanobacterium thermoautotrophicum)).